The following is a 139-amino-acid chain: MIIFQDLISHNEMFSDIYKIWEITNGLCLEVEQKMLSKTTGNTDDSLIGRNSSSESTEDEVTESTIITSVDIVTNHHLQESIFTKEAYKKYIKDYMKSINEKLEEQRPERVKLFITGMKNKSSTSLLIFKTTSSLLVKT.

Positions 1-139 (MIIFQDLISH…KTTSSLLVKT (139 aa)) constitute a TCTP domain. Positions 40–51 (TGNTDDSLIGRN) are enriched in polar residues. A disordered region spans residues 40–60 (TGNTDDSLIGRNSSSESTEDE).

This sequence belongs to the TCTP family.

This is Putative translationally-controlled tumor protein-like protein TPT1P8 (TPT1P8) from Homo sapiens (Human).